The primary structure comprises 1382 residues: Hepatocyte growth factor receptor (1382 aa).

Positions 1 to 24 (MKSPAVLAPGILVFLFTFVQKSDG) are cleaved as a signal peptide. The Extracellular portion of the chain corresponds to 25-933 (ECKEALVKSR…VIVQPDQNFT (909 aa)). The 490-residue stretch at 27 to 516 (KEALVKSRMN…TGKKITKIPL (490 aa)) folds into the Sema domain. Asparagine 45 carries an N-linked (GlcNAc...) asparagine glycan. Disulfide bonds link cysteine 95–cysteine 101, cysteine 98–cysteine 160, cysteine 133–cysteine 141, and cysteine 173–cysteine 176. The N-linked (GlcNAc...) asparagine glycan is linked to asparagine 106. Asparagine 149 carries N-linked (GlcNAc...) asparagine glycosylation. 2 N-linked (GlcNAc...) asparagine glycosylation sites follow: asparagine 203 and asparagine 359. 2 disulfide bridges follow: cysteine 299/cysteine 364 and cysteine 386/cysteine 398. Residues asparagine 400 and asparagine 406 are each glycosylated (N-linked (GlcNAc...) asparagine). 4 disulfides stabilise this stretch: cysteine 521/cysteine 539, cysteine 527/cysteine 562, cysteine 530/cysteine 546, and cysteine 542/cysteine 552. 3 IPT/TIG domains span residues 564–656 (PAIY…FSYV), 658–740 (PIIT…FIYR), and 743–837 (PIVY…LIYV). A glycan (O-linked (Man) threonine) is linked at threonine 583. Asparagine 608 and asparagine 636 each carry an N-linked (GlcNAc...) asparagine glycan. O-linked (Man) threonine glycosylation is found at threonine 677 and threonine 762. N-linked (GlcNAc...) asparagine glycans are attached at residues asparagine 786, asparagine 880, and asparagine 931. A helical membrane pass occupies residues 934–956 (GLIVGVVSISIILLLLLGLFLWL). Over 957–1382 (KKRKQIKDLG…QDNVNGEGDT (426 aa)) the chain is Cytoplasmic. At serine 967 the chain carries Phosphoserine. Residue threonine 978 is modified to Phosphothreonine. Phosphoserine occurs at positions 991, 998, and 1001. At tyrosine 1004 the chain carries Phosphotyrosine. Positions 1079–1346 (VHFNEVIGRG…RISAIFSTFI (268 aa)) constitute a Protein kinase domain. ATP contacts are provided by residues 1085-1093 (IGRGHFGCV) and lysine 1111. The active-site Proton acceptor is the aspartate 1205. Residues 1213 to 1382 (LDEKFTVKVA…QDNVNGEGDT (170 aa)) are interaction with RANBP9. Tyrosine 1231 is subject to Phosphotyrosine. 2 positions are modified to phosphotyrosine; by autocatalysis: tyrosine 1235 and tyrosine 1236. Threonine 1290 carries the post-translational modification Phosphothreonine. Residues 1321 to 1360 (WHPKAELRPSFSELVSRISAIFSTFIGEHYVHVNATYVNV) form an interaction with MUC20 region. Tyrosine 1350 and tyrosine 1357 each carry phosphotyrosine; by autocatalysis. Tyrosine 1366 is subject to Phosphotyrosine.

This sequence belongs to the protein kinase superfamily. Tyr protein kinase family. As to quaternary structure, heterodimer made of an alpha chain (50 kDa) and a beta chain (145 kDa) which are disulfide linked. Binds PLXNB1. Interacts when phosphorylated with downstream effectors including STAT3, PIK3R1, SRC, PCLG1, GRB2 and GAB1. Interacts with SPSB1, SPSB2 and SPSB4. Interacts with INPP5D/SHIP1. When phosphorylated at Tyr-1357, interacts with INPPL1/SHIP2. Interacts with RANBP9 and RANBP10, as well as SPSB1, SPSB2, SPSB3 and SPSB4. SPSB1 binding occurs in the presence and in the absence of HGF, however HGF treatment has a positive effect on this interaction. Interacts with MUC20; prevents interaction with GRB2 and suppresses hepatocyte growth factor-induced cell proliferation. Interacts with GRB10. Interacts with PTPN1 and PTPN2. Interacts with HSP90AA1 and HSP90AB1; the interaction suppresses MET kinase activity. Interacts with tensin TNS3. Interacts (when phosphorylated) with tensin TNS4 (via SH2 domain); the interaction increases MET protein stability by inhibiting MET endocytosis and subsequent lysosomal degradation. Autophosphorylated in response to ligand binding on Tyr-1235 and Tyr-1236 in the kinase domain leading to further phosphorylation of Tyr-1350 and Tyr-1357 in the C-terminal multifunctional docking site. Dephosphorylated by PTPRJ at Tyr-1350 and Tyr-1366. Dephosphorylated by PTPN1 and PTPN2. Post-translationally, ubiquitinated. Ubiquitination by CBL regulates the receptor stability and activity through proteasomal degradation. In terms of processing, O-mannosylation of IPT/TIG domains by TMEM260 is required for protein maturation. O-mannosylated residues are composed of single mannose glycans that are not elongated or modified.

Its subcellular location is the membrane. The enzyme catalyses L-tyrosyl-[protein] + ATP = O-phospho-L-tyrosyl-[protein] + ADP + H(+). With respect to regulation, in its inactive state, the C-terminal tail interacts with the catalytic domain and inhibits the kinase activity. Upon ligand binding, the C-terminal tail is displaced and becomes phosphorylated, thus increasing the kinase activity. In terms of biological role, receptor tyrosine kinase that transduces signals from the extracellular matrix into the cytoplasm by binding to hepatocyte growth factor/HGF ligand. Regulates many physiological processes including proliferation, scattering, morphogenesis and survival. Ligand binding at the cell surface induces autophosphorylation of MET on its intracellular domain that provides docking sites for downstream signaling molecules. Following activation by ligand, interacts with the PI3-kinase subunit PIK3R1, PLCG1, SRC, GRB2, STAT3 or the adapter GAB1. Recruitment of these downstream effectors by MET leads to the activation of several signaling cascades including the RAS-ERK, PI3 kinase-AKT, or PLCgamma-PKC. The RAS-ERK activation is associated with the morphogenetic effects while PI3K/AKT coordinates prosurvival effects. During embryonic development, MET signaling plays a role in gastrulation, development and migration of muscles and neuronal precursors, angiogenesis and kidney formation. In adults, participates in wound healing as well as organ regeneration and tissue remodeling. Also promotes differentiation and proliferation of hematopoietic cells. This is Hepatocyte growth factor receptor (MET) from Muntiacus muntjak (Barking deer).